We begin with the raw amino-acid sequence, 219 residues long: tRNA (guanine-N(7)-)-methyltransferase (219 aa).

E51, E76, D103, and D125 together coordinate S-adenosyl-L-methionine. D125 is an active-site residue. Substrate contacts are provided by residues K129, D161, and 199–202 (TRYE).

The protein belongs to the class I-like SAM-binding methyltransferase superfamily. TrmB family.

The catalysed reaction is guanosine(46) in tRNA + S-adenosyl-L-methionine = N(7)-methylguanosine(46) in tRNA + S-adenosyl-L-homocysteine. It functions in the pathway tRNA modification; N(7)-methylguanine-tRNA biosynthesis. Catalyzes the formation of N(7)-methylguanine at position 46 (m7G46) in tRNA. The protein is tRNA (guanine-N(7)-)-methyltransferase of Hyphomonas neptunium (strain ATCC 15444).